Consider the following 361-residue polypeptide: (S)-coclaurine N-methyltransferase (361 aa).

S-adenosyl-L-methionine is bound by residues Ser-101, Gly-139, Asn-163, Gln-167, Asp-189, Ile-190, and Val-205. Residue Cys-336 is part of the active site.

This sequence belongs to the CFA/CMAS family. In terms of assembly, homodimer. Highly expressed in rhizomes. Detected in roots, petioles, flower buds and leaves. Expressed between the developing stele and ground tissues near the root apical meristem, in the immature endodermis, the pericycle and the spokes of developing xylem in the apical region of the root and in the protoderm of leaf primordia in rhizomes.

Its subcellular location is the cytoplasm. It carries out the reaction norreticuline + S-adenosyl-L-methionine = reticuline + S-adenosyl-L-homocysteine + H(+). The enzyme catalyses (S)-coclaurine + S-adenosyl-L-methionine = (S)-N-methylcoclaurine + S-adenosyl-L-homocysteine + H(+). The catalysed reaction is heliamine + S-adenosyl-L-methionine = N-methylheliamine + S-adenosyl-L-homocysteine + H(+). It functions in the pathway alkaloid biosynthesis. Its function is as follows. Involved in the biosynthesis of protoberberine alkaloids. N-methyltransferase with a substrate preference for (R,S)-norreticuline but also active with dimethoxytetrahydroisoquinoline. The protein is (S)-coclaurine N-methyltransferase of Thalictrum flavum subsp. glaucum (Yellow meadow rue).